Here is a 240-residue protein sequence, read N- to C-terminus: Small ribosomal subunit protein uS3m (240 aa).

Belongs to the universal ribosomal protein uS3 family.

Its subcellular location is the mitochondrion. This Chondrus crispus (Carrageen Irish moss) protein is Small ribosomal subunit protein uS3m (RPS3).